The chain runs to 1459 residues: DNA-binding protein RFX7 (1459 aa).

The tract at residues 1 to 27 (MAEEQQQPPPQQLDAPQQLPLSAPNPG) is disordered. The span at 12–21 (QLDAPQQLPL) shows a compositional bias: low complexity. A DNA-binding region (RFX-type winged-helix) is located at residues 108-183 (AFSWIRNTLE…YCYSGLRKKA (76 aa)). The PxLPxI/L motif; mediates interaction with ANKRA2 and RFXANK motif lies at 188–193 (PTLPNL). Disordered stretches follow at residues 303–347 (AKQQ…LPNG), 404–428 (SVKQ…ARHR), 482–590 (PSNS…GVTE), 634–659 (FTST…SPRK), 688–716 (GQKP…AQIP), and 918–1016 (SVTP…VPPS). Composition is skewed to polar residues over residues 404 to 416 (SVKQ…QNVP) and 482 to 502 (PSNS…TGTT). The span at 521 to 534 (SPGSRASSTGGTSA) shows a compositional bias: low complexity. Residues 537 to 549 (VKMEPEGSSDEHP) show a composition bias toward basic and acidic residues. Composition is skewed to polar residues over residues 562–578 (PLTT…NTDG), 634–645 (FTSTSSPSNGDS), and 706–716 (TESSTAGAQIP). Positions 947–963 (TPTPTPTPTPTPTPTPT) are enriched in pro residues. Positions 971–1009 (GSQSLSRESPCSRLAQTTPVDSALGSSRHTPIGTPHSNC) are enriched in polar residues.

It belongs to the RFX family. Interacts (via PxLPxI/L motif) with RFXANK (via ankyrin repeats). Interacts (via PxLPxI/L motif) with ANKRA2 (via ankyrin repeats). In terms of tissue distribution, expressed in spleen and lymph node and to a lower extend in brain (at protein level). Expressed in lymphoid organs and lymphoid cell subsets. Expressed throughout natural killer (NK) cell maturation.

It localises to the nucleus. Functionally, transcription factor. Acts as a transcriptional activator by binding to promoter regions of target genes, such as Rec8, Mxd4 and Ddit4. Plays a role in natural killer (NK) cell maintenance and immunity. May play a role in the process of ciliogenesis in the neural tube and neural tube closure. This chain is DNA-binding protein RFX7, found in Mus musculus (Mouse).